The following is a 137-amino-acid chain: Flagellar basal body rod protein FlgB (137 aa).

It belongs to the flagella basal body rod proteins family. The basal body constitutes a major portion of the flagellar organelle and consists of a number of rings mounted on a central rod. In Gram-negative bacteria, at least four rings, L, P, S and M are present, whereas Gram-positive bacteria lack the L and P rings. The rod consists of about 26 subunits of FlgG in the distal portion, and FlgB, FlgC and FlgF build up the proximal portion of the rod with about 6 subunits each. Rod assembly occurs by export via the flagellum-specific pathway of its constituent proteins and by their incorporation into the rod structure in the probable order of FlgB, FlgC, FlgF and FlgG. Another protein, FliE, also assembles onto the stable rod structure.

The protein resides in the bacterial flagellum basal body. Its function is as follows. Structural component of flagellum, the bacterial motility apparatus. Part of the rod structure of flagellar basal body. The sequence is that of Flagellar basal body rod protein FlgB from Proteus mirabilis (strain HI4320).